The sequence spans 249 residues: MQGILAEIELDFPPLQIQEKIATILDTFTELSAELRERKKQYAFYRDYLLNQENIRKIYGANIPFETFQVKDICEIRRGRAITKAYIRNNPGENPVYSAATTNDGELGRIKDCDFDGEYITWTTNGYAGVVFYRNGKFNASQDCGVLKVKNKKICTKFLSFLLKIEAPKFVHNLASRPKLSQKVMAEIELSFPPLEIQEKIADILFAFEKLCNDLVEGIPAEIEMRKKQLDYYYHLIFSKIAHFSKQLA.

It belongs to the type-I restriction system S methylase family. As to quaternary structure, the methyltransferase is composed of M and S polypeptides.

In terms of biological role, the specificity (S) subunit of a type I methyltransferase (MTase); this subunit dictates DNA sequence specificity. The single R subunit has multiple frameshifts and is probably not expressed. This chain is Putative type I specificity subunit S.MpnORF615P, found in Mycoplasma pneumoniae (strain ATCC 29342 / M129 / Subtype 1) (Mycoplasmoides pneumoniae).